Consider the following 207-residue polypeptide: Protein DMP1 (207 aa).

Positions 1-20 (MSETSLLIPKTNSPASSENM) are disordered. 4 helical membrane-spanning segments follow: residues 33–53 (LIKL…PVLT), 64–84 (VMSS…CFTD), 121–141 (IADF…VLLD), and 159–179 (LVMA…ALFP).

It belongs to the plant DMP1 protein family. Expressed in leaves, siliques and roots.

The protein localises to the endoplasmic reticulum membrane. It localises to the vacuole membrane. Involved in membrane remodeling including fission during breakdown of the endoplasmic reticulum (ER) and the tonoplast during leaf senescence and in membrane fusion during vacuole biogenesis in roots. The sequence is that of Protein DMP1 from Arabidopsis thaliana (Mouse-ear cress).